A 299-amino-acid polypeptide reads, in one-letter code: MQAIILGSAAGGGVPQWNCRCPICAMAWAGDRRVLPRTQSSLAVSPDGERWLLVNASPDIRQQLLATPALHPRHGLRHTPIEAVLLTNGDVDHVAGLLTLRESQPFRLHATRNILESVSANRVFDVLAADLVARREVGLNETFEPVSGLAVTLFPVPGKVPLWLEEGTPEIGAETETTVGAMIEAGGRRLAYVPGCARVTEDLRHRLAGVDALLFDGTVLADDDMIRAGVGTKTGWRMGHVPMTGQGGSIAALAEVPIGRRIFVHINNTNPVLVENSEARRAVEAAGWDVGHDGMALRL.

Belongs to the PqqB family.

Its pathway is cofactor biosynthesis; pyrroloquinoline quinone biosynthesis. Functionally, may be involved in the transport of PQQ or its precursor to the periplasm. This Methylobacterium nodulans (strain LMG 21967 / CNCM I-2342 / ORS 2060) protein is Coenzyme PQQ synthesis protein B.